A 205-amino-acid chain; its full sequence is Large ribosomal subunit protein bL9 (205 aa).

The disordered stretch occupies residues 160–205 (RDRKSRNAAAASEVQDAPVEDGGDEVVSVDSVAAEDGGADASGGTA). The span at 184 to 195 (EVVSVDSVAAED) shows a compositional bias: low complexity.

Belongs to the bacterial ribosomal protein bL9 family.

Functionally, binds to the 23S rRNA. This chain is Large ribosomal subunit protein bL9, found in Anaplasma phagocytophilum (strain HZ).